The sequence spans 244 residues: Dirigent protein 18 (244 aa).

The first 25 residues, 1 to 25 (MMKQSPFSLLTSIFLIAALFTATTA), serve as a signal peptide directing secretion.

It belongs to the plant dirigent protein family. Homodimer.

Its subcellular location is the secreted. It localises to the extracellular space. The protein localises to the apoplast. Its function is as follows. Dirigent proteins impart stereoselectivity on the phenoxy radical-coupling reaction, yielding optically active lignans from two molecules of coniferyl alcohol in the biosynthesis of lignans, flavonolignans, and alkaloids and thus plays a central role in plant secondary metabolism. The polypeptide is Dirigent protein 18 (DIR18) (Arabidopsis thaliana (Mouse-ear cress)).